We begin with the raw amino-acid sequence, 161 residues long: uncharacterized protein (161 aa).

The protein belongs to the M.jannaschii MJ0150/MJ0739/MJ0745/MJ1460/MJ1642 family.

This is an uncharacterized protein from Methanocaldococcus jannaschii (strain ATCC 43067 / DSM 2661 / JAL-1 / JCM 10045 / NBRC 100440) (Methanococcus jannaschii).